A 129-amino-acid chain; its full sequence is Glycine cleavage system H protein (129 aa).

The Lipoyl-binding domain maps to 24 to 106; it reads EAVVGITEHA…YGAGWLFRIK (83 aa). The residue at position 65 (K65) is an N6-lipoyllysine.

The protein belongs to the GcvH family. The glycine cleavage system is composed of four proteins: P, T, L and H. (R)-lipoate is required as a cofactor.

Functionally, the glycine cleavage system catalyzes the degradation of glycine. The H protein shuttles the methylamine group of glycine from the P protein to the T protein. This is Glycine cleavage system H protein from Aeromonas hydrophila subsp. hydrophila (strain ATCC 7966 / DSM 30187 / BCRC 13018 / CCUG 14551 / JCM 1027 / KCTC 2358 / NCIMB 9240 / NCTC 8049).